A 123-amino-acid polypeptide reads, in one-letter code: UPF0102 protein PFL_5073 (123 aa).

It belongs to the UPF0102 family.

The protein is UPF0102 protein PFL_5073 of Pseudomonas fluorescens (strain ATCC BAA-477 / NRRL B-23932 / Pf-5).